The chain runs to 297 residues: Large ribosomal subunit protein uL18 (297 aa).

Glycine 2 bears the N-acetylglycine mark. An N6-acetyllysine mark is found at lysine 5 and lysine 48. Serine 185 carries the post-translational modification Phosphoserine. The residue at position 220 (lysine 220) is an N6-acetyllysine; alternate. Residue lysine 220 forms a Glycyl lysine isopeptide (Lys-Gly) (interchain with G-Cter in SUMO1); alternate linkage. Lysine 220 is covalently cross-linked (Glycyl lysine isopeptide (Lys-Gly) (interchain with G-Cter in SUMO2); alternate). At threonine 232 the chain carries Phosphothreonine. The tract at residues 252–297 (VYEKKPKKEVKKKRWNRPKMSLAQKKDRVAQKKASFLRAQERAAES) is disordered. Basic residues predominate over residues 258–268 (KKEVKKKRWNR). Serine 272 carries the phosphoserine modification.

Belongs to the universal ribosomal protein uL18 family. In terms of assembly, component of the large ribosomal subunit (LSU). Part of the 5S RNP complex, which is a LSU subcomplex composed of the 5S RNA, RPL5 and RPL11. Component of a hexameric 5S RNP precursor complex, composed of 5S RNA, RRS1, RPF2/BXDC1, RPL5, RPL11 and HEATR3; this complex acts as a precursor for ribosome assembly. Interacts with NVL in an ATP-dependent manner. Interacts with RRP1B. Interacts with IPO5, IPO7 and KPNB1; these interactions may be involved in RPL5 nuclear import for the assembly of ribosomal subunits.

The protein resides in the cytoplasm. The protein localises to the nucleus. Its subcellular location is the nucleolus. Component of the ribosome, a large ribonucleoprotein complex responsible for the synthesis of proteins in the cell. The small ribosomal subunit (SSU) binds messenger RNAs (mRNAs) and translates the encoded message by selecting cognate aminoacyl-transfer RNA (tRNA) molecules. The large subunit (LSU) contains the ribosomal catalytic site termed the peptidyl transferase center (PTC), which catalyzes the formation of peptide bonds, thereby polymerizing the amino acids delivered by tRNAs into a polypeptide chain. The nascent polypeptides leave the ribosome through a tunnel in the LSU and interact with protein factors that function in enzymatic processing, targeting, and the membrane insertion of nascent chains at the exit of the ribosomal tunnel. As part of the 5S RNP/5S ribonucleoprotein particle it is an essential component of the LSU, required for its formation and the maturation of rRNAs. It also couples ribosome biogenesis to p53/TP53 activation. As part of the 5S RNP it accumulates in the nucleoplasm and inhibits MDM2, when ribosome biogenesis is perturbed, mediating the stabilization and the activation of TP53. The chain is Large ribosomal subunit protein uL18 (RPL5) from Bos taurus (Bovine).